The following is a 484-amino-acid chain: PTS system MurNAc-GlcNAc-specific EIIBC component (484 aa).

One can recognise a PTS EIIB type-1 domain in the interval 5-87 (QQLAERIIAA…AELSGVKLGD (83 aa)). Residue Cys27 is the Phosphocysteine intermediate; for EIIB activity of the active site. One can recognise a PTS EIIC type-1 domain in the interval 130–484 (KSIANIFIPL…AMRQTDLLGD (355 aa)). 10 helical membrane-spanning segments follow: residues 135–155 (IFIP…IAAV), 160–180 (MVAG…FNVI), 200–220 (FGAT…TGIA), 234–254 (LQPG…LSIV), 274–294 (IALL…AGFV), 305–325 (IISI…LPLV), 349–369 (LLPI…ALWV), 384–404 (ALPV…TLPL), 408–428 (FLTA…IGHI), and 450–470 (LGYI…TYLF).

The protein localises to the cell membrane. The enzyme catalyses N-acetyl-beta-D-muramate-(1-&gt;4)-N-acetyl-D-glucosamine(out) + N(pros)-phospho-L-histidyl-[protein] = 6-phospho-N-acetyl-beta-D-muramate-(1-&gt;4)-N-acetyl-D-glucosamine(in) + L-histidyl-[protein]. The protein operates within cell wall biogenesis; peptidoglycan recycling. Its function is as follows. The phosphoenolpyruvate-dependent sugar phosphotransferase system (sugar PTS), a major carbohydrate active transport system, catalyzes the phosphorylation of incoming sugar substrates concomitantly with their translocation across the cell membrane. This system is involved in the uptake and phosphorylation of MurNAc-GlcNAc, the principle peptidoglycan turnover product of S.aureus, yielding cytoplasmic MurNAc 6P-GlcNAc. The protein is PTS system MurNAc-GlcNAc-specific EIIBC component of Staphylococcus aureus (strain bovine RF122 / ET3-1).